The chain runs to 245 residues: 1-(5-phosphoribosyl)-5-[(5-phosphoribosylamino)methylideneamino] imidazole-4-carboxamide isomerase (245 aa).

The Proton acceptor role is filled by Asp8. Asp131 acts as the Proton donor in catalysis.

It belongs to the HisA/HisF family.

Its subcellular location is the cytoplasm. It carries out the reaction 1-(5-phospho-beta-D-ribosyl)-5-[(5-phospho-beta-D-ribosylamino)methylideneamino]imidazole-4-carboxamide = 5-[(5-phospho-1-deoxy-D-ribulos-1-ylimino)methylamino]-1-(5-phospho-beta-D-ribosyl)imidazole-4-carboxamide. It participates in amino-acid biosynthesis; L-histidine biosynthesis; L-histidine from 5-phospho-alpha-D-ribose 1-diphosphate: step 4/9. In Verminephrobacter eiseniae (strain EF01-2), this protein is 1-(5-phosphoribosyl)-5-[(5-phosphoribosylamino)methylideneamino] imidazole-4-carboxamide isomerase.